Here is a 508-residue protein sequence, read N- to C-terminus: Glycerol kinase (508 aa).

Position 14 (T14) interacts with ADP. ATP contacts are provided by T14, T15, and S16. Position 14 (T14) interacts with sn-glycerol 3-phosphate. ADP is bound at residue R18. The sn-glycerol 3-phosphate site is built by R84, E85, and Y136. Residues R84, E85, and Y136 each contribute to the glycerol site. H232 carries the phosphohistidine; by HPr modification. Residue D246 participates in sn-glycerol 3-phosphate binding. 2 residues coordinate glycerol: D246 and Q247. T268 and G311 together coordinate ADP. Residues T268, G311, Q315, and G412 each coordinate ATP. ADP-binding residues include G412 and N416.

This sequence belongs to the FGGY kinase family. In terms of assembly, homotetramer and homodimer (in equilibrium). Post-translationally, the phosphoenolpyruvate-dependent sugar phosphotransferase system (PTS), including enzyme I, and histidine-containing protein (HPr) are required for the phosphorylation, which leads to the activation of the enzyme.

The catalysed reaction is glycerol + ATP = sn-glycerol 3-phosphate + ADP + H(+). It functions in the pathway polyol metabolism; glycerol degradation via glycerol kinase pathway; sn-glycerol 3-phosphate from glycerol: step 1/1. Its activity is regulated as follows. Activated by phosphorylation and inhibited by fructose 1,6-bisphosphate (FBP). In terms of biological role, key enzyme in the regulation of glycerol uptake and metabolism. Catalyzes the phosphorylation of glycerol to yield sn-glycerol 3-phosphate. In Streptococcus pyogenes serotype M28 (strain MGAS6180), this protein is Glycerol kinase.